Reading from the N-terminus, the 425-residue chain is Serine hydroxymethyltransferase (425 aa).

(6S)-5,6,7,8-tetrahydrofolate contacts are provided by residues leucine 124 and 128-130 (GHL). At lysine 233 the chain carries N6-(pyridoxal phosphate)lysine.

This sequence belongs to the SHMT family. As to quaternary structure, homodimer. It depends on pyridoxal 5'-phosphate as a cofactor.

It is found in the cytoplasm. It carries out the reaction (6R)-5,10-methylene-5,6,7,8-tetrahydrofolate + glycine + H2O = (6S)-5,6,7,8-tetrahydrofolate + L-serine. The protein operates within one-carbon metabolism; tetrahydrofolate interconversion. Its pathway is amino-acid biosynthesis; glycine biosynthesis; glycine from L-serine: step 1/1. Its function is as follows. Catalyzes the reversible interconversion of serine and glycine with tetrahydrofolate (THF) serving as the one-carbon carrier. This reaction serves as the major source of one-carbon groups required for the biosynthesis of purines, thymidylate, methionine, and other important biomolecules. Also exhibits THF-independent aldolase activity toward beta-hydroxyamino acids, producing glycine and aldehydes, via a retro-aldol mechanism. In Clavibacter michiganensis subsp. michiganensis (strain NCPPB 382), this protein is Serine hydroxymethyltransferase.